The primary structure comprises 510 residues: ATP synthase subunit alpha (510 aa).

169–176 is an ATP binding site; sequence GDRQTGKT.

It belongs to the ATPase alpha/beta chains family. As to quaternary structure, F-type ATPases have 2 components, CF(1) - the catalytic core - and CF(0) - the membrane proton channel. CF(1) has five subunits: alpha(3), beta(3), gamma(1), delta(1), epsilon(1). CF(0) has three main subunits: a(1), b(2) and c(9-12). The alpha and beta chains form an alternating ring which encloses part of the gamma chain. CF(1) is attached to CF(0) by a central stalk formed by the gamma and epsilon chains, while a peripheral stalk is formed by the delta and b chains.

It is found in the cell inner membrane. The catalysed reaction is ATP + H2O + 4 H(+)(in) = ADP + phosphate + 5 H(+)(out). Its function is as follows. Produces ATP from ADP in the presence of a proton gradient across the membrane. The alpha chain is a regulatory subunit. This chain is ATP synthase subunit alpha, found in Anaeromyxobacter dehalogenans (strain 2CP-1 / ATCC BAA-258).